The sequence spans 94 residues: Integration host factor subunit beta (94 aa).

Belongs to the bacterial histone-like protein family. Heterodimer of an alpha and a beta chain.

This protein is one of the two subunits of integration host factor, a specific DNA-binding protein that functions in genetic recombination as well as in transcriptional and translational control. The protein is Integration host factor subunit beta of Caulobacter sp. (strain K31).